We begin with the raw amino-acid sequence, 138 residues long: CLAVATA3/ESR (CLE)-related protein 2 (138 aa).

A signal peptide spans 1–22; the sequence is MPNIFKILLIVLLAVVSFRLSA. A required for secretion from the host cytoplasm to the host apoplasm region spans residues 23–90; it reads STGDKKTAND…VPSHVTNRSM (68 aa). 3 N-linked (GlcNAc...) asparagine glycosylation sites follow: N37, N87, and N123. Disordered regions lie at residues 66–97 and 116–138; these read AIGR…PPPV and LAEK…PHHH. The short motif at 127–138 is the CLE element; that stretch reads RLSPSGPDPHHH.

It belongs to the CLV3/ESR signal peptide family. As to expression, highly expressed exclusively within the dorsal esophageal gland cell during syncytium formation in host plants (at protein level).

The protein localises to the secreted. The protein resides in the host cytoplasm. It is found in the host extracellular space. It localises to the extracellular space. Its subcellular location is the apoplast. Mimics host plant CLE extracellular signal peptides that regulate cell fate. May play a role in the differentiation or division of feeding cells (syncytia) induced in plant roots during infection. In Heterodera glycines (Soybean cyst nematode worm), this protein is CLAVATA3/ESR (CLE)-related protein 2 (CLE2).